The primary structure comprises 361 residues: 3-dehydroquinate synthase (361 aa).

Belongs to the archaeal-type DHQ synthase family.

The enzyme catalyses 2-amino-2,3,7-trideoxy-D-lyxo-hept-6-ulosonate + NAD(+) + H2O = 3-dehydroquinate + NH4(+) + NADH + H(+). In terms of biological role, catalyzes the oxidative deamination and cyclization of 2-amino-3,7-dideoxy-D-threo-hept-6-ulosonic acid (ADH) to yield 3-dehydroquinate (DHQ), which is fed into the canonical shikimic pathway of aromatic amino acid biosynthesis. The polypeptide is 3-dehydroquinate synthase (Methanococcus maripaludis (strain C6 / ATCC BAA-1332)).